We begin with the raw amino-acid sequence, 299 residues long: ATP phosphoribosyltransferase (299 aa).

Belongs to the ATP phosphoribosyltransferase family. Long subfamily. Mg(2+) serves as cofactor.

It is found in the cytoplasm. It carries out the reaction 1-(5-phospho-beta-D-ribosyl)-ATP + diphosphate = 5-phospho-alpha-D-ribose 1-diphosphate + ATP. It participates in amino-acid biosynthesis; L-histidine biosynthesis; L-histidine from 5-phospho-alpha-D-ribose 1-diphosphate: step 1/9. Its activity is regulated as follows. Feedback inhibited by histidine. Catalyzes the condensation of ATP and 5-phosphoribose 1-diphosphate to form N'-(5'-phosphoribosyl)-ATP (PR-ATP). Has a crucial role in the pathway because the rate of histidine biosynthesis seems to be controlled primarily by regulation of HisG enzymatic activity. The sequence is that of ATP phosphoribosyltransferase from Actinobacillus pleuropneumoniae serotype 7 (strain AP76).